The following is a 485-amino-acid chain: Probable trichothecene esterase SAT6 (485 aa).

The tract at residues M1–V23 is disordered. Residues L9–V23 are compositionally biased toward low complexity. Active-site charge relay system residues include S262, D406, and H438.

The protein belongs to the AB hydrolase superfamily. Lipase family.

It functions in the pathway mycotoxin biosynthesis. Its function is as follows. Probable trichothecene esterase; part of the satratoxin SC1 cluster involved in the biosynthesis of satratoxins, trichothecene mycotoxins that are associated with human food poisonings. Satratoxins are suggested to be made by products of multiple gene clusters (SC1, SC2 and SC3) that encode 21 proteins in all, including polyketide synthases, acetyltransferases, and other enzymes expected to modify the trichothecene skeleton. SC1 encodes 10 proteins, SAT1 to SAT10. The largest are SAT8, which encodes a putative polyketide synthase (PKS) with a conventional non-reducing architecture, and SAT10, a putative protein containing four ankyrin repeats and thus may be involved in protein scaffolding. The putative short-chain reductase SAT3 may assist the PKS in some capacity. SAT6 contains a secretory lipase domain and acts probably as a trichothecene esterase. SAT5 encodes a putative acetyltransferase, and so, with SAT6, may affect endogenous protection from toxicity. The probable transcription factor SAT9 may regulate the expression of the SC1 cluster. SC2 encodes proteins SAT11 to SAT16, the largest of which encodes the putative reducing PKS SAT13. SAT11 is a cytochrome P450 monooxygenase, while SAT14 and SAT16 are probable acetyltransferases. The SC2 cluster may be regulated by the transcription factor SAT15. SC3 is a small cluster that encodes 5 proteins, SAT17 to SAT21. SAT21 is a putative MFS-type transporter which may have a role in exporting secondary metabolites. The four other proteins putatively encoded in SC3 include the taurine hydroxylase-like protein SAT17, the O-methyltransferase SAT18, the acetyltransferase SAT19, and the Cys6-type zinc finger SAT20, the latter being probably involved in regulation of SC3 expression. The chain is Probable trichothecene esterase SAT6 from Stachybotrys chartarum (strain CBS 109288 / IBT 7711) (Toxic black mold).